The sequence spans 81 residues: Putative chemokine-related protein B42 (81 aa).

3 cysteine pairs are disulfide-bonded: Cys7–Cys73, Cys8–Cys29, and Cys11–Cys45.

In terms of tissue distribution, expressed in placenta, heart, lung, liver, pancreas, skeletal muscle and brain.

The protein localises to the cytoplasm. The polypeptide is Putative chemokine-related protein B42 (Homo sapiens (Human)).